The sequence spans 675 residues: Zinc finger CCCH domain-containing protein 65 (675 aa).

Positions 294 to 320 are disordered; the sequence is TFSNEAKMDPGTSIKKRSAPSKDAKAR. The span at 307–320 shows a compositional bias: basic residues; it reads IKKRSAPSKDAKAR. The stretch at 314–342 forms a coiled coil; sequence SKDAKARKRAKARIKRAQERIALGVKKLK. 3 C3H1-type zinc fingers span residues 350-377, 384-406, and 409-432; these read PKPI…HDTI, PCCY…HDLS, and PCNN…HKGT. 2 disordered regions span residues 487–572 and 586–612; these read LKPS…LPLG and EQKT…SHIQ. Positions 490–504 are enriched in low complexity; the sequence is SSHSNQRNSSDASSS. The span at 543 to 567 shows a compositional bias: polar residues; that stretch reads KASSASKPNTDNSDSQTLKQSQQGS. Positions 586–595 are enriched in basic and acidic residues; that stretch reads EQKTLNREPQ. A compositionally biased stretch (polar residues) spans 597–612; that stretch reads PASSKNLKTTPSSHIQ.

Its function is as follows. Possesses RNA-binding and ribonuclease activities in vitro. The sequence is that of Zinc finger CCCH domain-containing protein 65 (EMB1789) from Arabidopsis thaliana (Mouse-ear cress).